The chain runs to 197 residues: Putative ankyrin repeat protein R875 (197 aa).

ANK repeat units lie at residues 78–106, 107–136, 138–166, and 168–196; these read LNKCLIGYCISGRLDIVKYLVILGADIRE, NDDCVVRTACHNGHIEVVKYLVNQGADIRA, DDDAIRLASKNGHLYVVKYLVSQGVNFRK, and NDYEINWASQNGHGSVVDFLVSKGAVLHE.

The chain is Putative ankyrin repeat protein R875 from Acanthamoeba polyphaga mimivirus (APMV).